Here is a 263-residue protein sequence, read N- to C-terminus: Tropinone reductase homolog At2g29300 (263 aa).

NADP(+) is bound at residue 13 to 37 (LVTGAASGIGYAIVEELAGFGARIH). Residue Ser146 coordinates substrate. Residue Tyr160 is the Proton acceptor of the active site.

The protein belongs to the short-chain dehydrogenases/reductases (SDR) family. SDR65C subfamily.

The protein is Tropinone reductase homolog At2g29300 of Arabidopsis thaliana (Mouse-ear cress).